Reading from the N-terminus, the 164-residue chain is Lipoprotein signal peptidase (164 aa).

4 consecutive transmembrane segments (helical) span residues 6 to 26 (LGVLAGIVALVLDQVTKLWLL), 39 to 59 (VLPFFDLVLAWNTGISYGWFS), 65 to 85 (GQILMLAFKAVAIVALAIWMA), and 88 to 108 (TTKLATIGLGLIIGGAIGNAI). Residues Asp-118 and Asp-140 contribute to the active site. A helical membrane pass occupies residues 141-161 (VAIVVGVAALLYDSLIGLPAA).

Belongs to the peptidase A8 family.

It localises to the cell inner membrane. It catalyses the reaction Release of signal peptides from bacterial membrane prolipoproteins. Hydrolyzes -Xaa-Yaa-Zaa-|-(S,diacylglyceryl)Cys-, in which Xaa is hydrophobic (preferably Leu), and Yaa (Ala or Ser) and Zaa (Gly or Ala) have small, neutral side chains.. The protein operates within protein modification; lipoprotein biosynthesis (signal peptide cleavage). This protein specifically catalyzes the removal of signal peptides from prolipoproteins. This Rhodopseudomonas palustris (strain ATCC BAA-98 / CGA009) protein is Lipoprotein signal peptidase.